Here is a 63-residue protein sequence, read N- to C-terminus: Transmembrane protein ZNF593OS (63 aa).

A helical transmembrane segment spans residues 30–50 (LAGVVATVLAVLGLGGSCYAV).

The protein localises to the membrane. The protein is Transmembrane protein ZNF593OS of Homo sapiens (Human).